Here is a 198-residue protein sequence, read N- to C-terminus: V-type proton ATPase subunit E (198 aa).

This sequence belongs to the V-ATPase E subunit family.

Functionally, produces ATP from ADP in the presence of a proton gradient across the membrane. The sequence is that of V-type proton ATPase subunit E from Borrelia duttonii (strain Ly).